A 263-amino-acid chain; its full sequence is uncharacterized protein (263 aa).

The signal sequence occupies residues 1 to 22; it reads MGYLKRLVLYIVIMVMSVFIIG. Residue Cys23 is the site of N-palmitoyl cysteine attachment. Cys23 carries the S-diacylglycerol cysteine lipid modification.

The protein belongs to the staphylococcal tandem lipoprotein family.

It is found in the cell membrane. This is an uncharacterized protein from Staphylococcus aureus (strain N315).